The chain runs to 115 residues: Cholecystokinin (115 aa).

Residues 1-20 (MNSGVCLCVLMAVLAAGALT) form the signal peptide. The propeptide occupies 21–44 (QPVPPADPAGSGLQRAEEAPRRQL). The interval 23 to 52 (VPPADPAGSGLQRAEEAPRRQLRVSQRTDG) is disordered. S31 carries an O-linked (Xyl...) (chondroitin sulfate) serine glycan. Y97 is modified (sulfotyrosine). The residue at position 103 (F103) is a Phenylalanine amide. Positions 107–115 (SAEEYEYPS) are excised as a propeptide. A sulfotyrosine mark is found at Y111 and Y113.

The protein belongs to the gastrin/cholecystokinin family. As to quaternary structure, binds to CCK-A receptors in the pancreas and CCK-B receptors in the brain. The precursor is cleaved by proteases to produce a number of active cholecystokinins. Post-translationally, the precursor is cleaved by ACE, which removes the Gly-Arg-Arg peptide at the C-terminus, leading to mature hormone. In terms of tissue distribution, detected in cerebrospinal fluid and urine (at protein level).

It is found in the secreted. Its function is as follows. This peptide hormone induces gall bladder contraction and the release of pancreatic enzymes in the gut. Its function in the brain is not clear. Binding to CCK-A receptors stimulates amylase release from the pancreas, binding to CCK-B receptors stimulates gastric acid secretion. The chain is Cholecystokinin (CCK) from Homo sapiens (Human).